The chain runs to 323 residues: V-type ATP synthase subunit C (323 aa).

This sequence belongs to the V-ATPase V0D/AC39 subunit family.

Its function is as follows. Produces ATP from ADP in the presence of a proton gradient across the membrane. In Thermus thermophilus (strain ATCC BAA-163 / DSM 7039 / HB27), this protein is V-type ATP synthase subunit C.